A 154-amino-acid chain; its full sequence is MFGADKGTADRLDGKKLHIGIVQARFNSGITNALAAACCAELLALGVQDKHIMQVQVPGALEIPVALQAMAERNHYDALIALGCIIRGQTYHFELVANESGAGVTRLALDYQIPIANAIITVENLEQAIARQSEKGADAARVAVEMANLLDALS.

Residues Phe26, 60–62, and 84–86 each bind 5-amino-6-(D-ribitylamino)uracil; these read ALE and CII. Residue 89-90 participates in (2S)-2-hydroxy-3-oxobutyl phosphate binding; sequence QT. Catalysis depends on His92, which acts as the Proton donor. Asn117 contacts 5-amino-6-(D-ribitylamino)uracil. Arg131 lines the (2S)-2-hydroxy-3-oxobutyl phosphate pocket.

This sequence belongs to the DMRL synthase family.

The catalysed reaction is (2S)-2-hydroxy-3-oxobutyl phosphate + 5-amino-6-(D-ribitylamino)uracil = 6,7-dimethyl-8-(1-D-ribityl)lumazine + phosphate + 2 H2O + H(+). It participates in cofactor biosynthesis; riboflavin biosynthesis; riboflavin from 2-hydroxy-3-oxobutyl phosphate and 5-amino-6-(D-ribitylamino)uracil: step 1/2. Functionally, catalyzes the formation of 6,7-dimethyl-8-ribityllumazine by condensation of 5-amino-6-(D-ribitylamino)uracil with 3,4-dihydroxy-2-butanone 4-phosphate. This is the penultimate step in the biosynthesis of riboflavin. The chain is 6,7-dimethyl-8-ribityllumazine synthase from Verminephrobacter eiseniae (strain EF01-2).